A 156-amino-acid polypeptide reads, in one-letter code: Cyanate hydratase (156 aa).

Active-site residues include R96, E99, and S122.

It belongs to the cyanase family.

It catalyses the reaction cyanate + hydrogencarbonate + 3 H(+) = NH4(+) + 2 CO2. Functionally, catalyzes the reaction of cyanate with bicarbonate to produce ammonia and carbon dioxide. This is Cyanate hydratase from Escherichia coli O7:K1 (strain IAI39 / ExPEC).